The following is a 371-amino-acid chain: DNA replication and repair protein RecF (371 aa).

30–37 (GENAQGKT) lines the ATP pocket.

The protein belongs to the RecF family.

The protein localises to the cytoplasm. In terms of biological role, the RecF protein is involved in DNA metabolism; it is required for DNA replication and normal SOS inducibility. RecF binds preferentially to single-stranded, linear DNA. It also seems to bind ATP. The protein is DNA replication and repair protein RecF of Lysinibacillus sphaericus (strain C3-41).